Here is a 97-residue protein sequence, read N- to C-terminus: YcgL domain-containing protein PFL_1496 (97 aa).

The 85-residue stretch at 3–87 folds into the YcgL domain; that stretch reads RICSIYKSPR…AEDEYIEHLP (85 aa).

The polypeptide is YcgL domain-containing protein PFL_1496 (Pseudomonas fluorescens (strain ATCC BAA-477 / NRRL B-23932 / Pf-5)).